We begin with the raw amino-acid sequence, 138 residues long: MPRHHQRGSAASGGSQRQLRVAETVRHAVADILSQGSAHDPDLEGHIITVPEVRMSPDLKLATIYIMPLGGRDTDVVLAALERNKKFLRGEVARRVNLKFAPDIRFRVDERFDEAERIEKLLRTPAVQRDLNSDLEES.

Belongs to the RbfA family. As to quaternary structure, monomer. Binds 30S ribosomal subunits, but not 50S ribosomal subunits or 70S ribosomes.

Its subcellular location is the cytoplasm. Its function is as follows. One of several proteins that assist in the late maturation steps of the functional core of the 30S ribosomal subunit. Associates with free 30S ribosomal subunits (but not with 30S subunits that are part of 70S ribosomes or polysomes). Required for efficient processing of 16S rRNA. May interact with the 5'-terminal helix region of 16S rRNA. This is Ribosome-binding factor A from Bradyrhizobium sp. (strain ORS 278).